We begin with the raw amino-acid sequence, 480 residues long: MTLSFTARWRDELPATYTALLPTPLKNARLIWYNDKLAQQLAIPASLFDATNGAGVWGGETLLPGMSPVAQVYSGHQFGVWAGQLGDGRGILLGEQLLADGSTLDWHLKGAGLTPYSRMGDGRAVLRSTIRESLASEAMHYLGIPTTRALSIVASDTPVQRETQETGAMLMRLAQSHMRFGHFEHFYYRREPEKVQQLADFAIRHYWPQWQDVAEKYALWFEEVAARTGRLIAEWQTVGFAHGVMNTDNMSILGLTIDYGPFGFLDDYDPGFIGNHSDHQGRYRFDNQPSVALWNLQRLAQTLTPFIEIDALNRALDRYQDALLTHYGQRMRQKLGFFTEQKDDNALLNELFSLMAREGSDYTRTFRMLSHTEQQSASSPLRDTFIDRAAFDAWFDRYRARLRTEAVDDALRQQQMQRVNPAVVLRNWLAQRAIDAAEQGDMAELHRLHEVLRQPFTDRDDDYASRPPEWGKRLEVSCSS.

Positions 86, 88, 89, 109, 121, 122, 172, and 179 each coordinate ATP. The active-site Proton acceptor is the D248. Positions 249 and 258 each coordinate Mg(2+). Residue D258 participates in ATP binding.

Belongs to the SELO family. Mg(2+) serves as cofactor. It depends on Mn(2+) as a cofactor.

The catalysed reaction is L-seryl-[protein] + ATP = 3-O-(5'-adenylyl)-L-seryl-[protein] + diphosphate. It carries out the reaction L-threonyl-[protein] + ATP = 3-O-(5'-adenylyl)-L-threonyl-[protein] + diphosphate. The enzyme catalyses L-tyrosyl-[protein] + ATP = O-(5'-adenylyl)-L-tyrosyl-[protein] + diphosphate. It catalyses the reaction L-histidyl-[protein] + UTP = N(tele)-(5'-uridylyl)-L-histidyl-[protein] + diphosphate. The catalysed reaction is L-seryl-[protein] + UTP = O-(5'-uridylyl)-L-seryl-[protein] + diphosphate. It carries out the reaction L-tyrosyl-[protein] + UTP = O-(5'-uridylyl)-L-tyrosyl-[protein] + diphosphate. Functionally, nucleotidyltransferase involved in the post-translational modification of proteins. It can catalyze the addition of adenosine monophosphate (AMP) or uridine monophosphate (UMP) to a protein, resulting in modifications known as AMPylation and UMPylation. The sequence is that of Protein nucleotidyltransferase YdiU from Salmonella paratyphi B (strain ATCC BAA-1250 / SPB7).